The chain runs to 226 residues: Chalcone--flavanone isomerase (226 aa).

Residues threonine 47, asparagine 112, and serine 189 each contribute to the substrate site.

Belongs to the chalcone isomerase family.

It carries out the reaction a chalcone = a flavanone.. It functions in the pathway secondary metabolite biosynthesis; flavonoid biosynthesis. In terms of biological role, catalyzes the intramolecular cyclization of bicyclic chalcones into tricyclic (S)-flavanones. Responsible for the isomerization of 4,2',4',6'-tetrahydroxychalcone (also termed chalcone) into naringenin. The sequence is that of Chalcone--flavanone isomerase (CHI) from Allium cepa (Onion).